The primary structure comprises 132 residues: Large ribosomal subunit protein bL19 (132 aa).

Belongs to the bacterial ribosomal protein bL19 family.

This protein is located at the 30S-50S ribosomal subunit interface and may play a role in the structure and function of the aminoacyl-tRNA binding site. This is Large ribosomal subunit protein bL19 from Methylobacterium radiotolerans (strain ATCC 27329 / DSM 1819 / JCM 2831 / NBRC 15690 / NCIMB 10815 / 0-1).